The sequence spans 293 residues: Phosphatidylserine decarboxylase proenzyme (293 aa).

Residues Asp90, His147, and Ser254 each act as charge relay system; for autoendoproteolytic cleavage activity in the active site. The Schiff-base intermediate with substrate; via pyruvic acid; for decarboxylase activity role is filled by Ser254. Ser254 is modified (pyruvic acid (Ser); by autocatalysis).

The protein belongs to the phosphatidylserine decarboxylase family. PSD-B subfamily. Prokaryotic type I sub-subfamily. In terms of assembly, heterodimer of a large membrane-associated beta subunit and a small pyruvoyl-containing alpha subunit. Pyruvate serves as cofactor. Post-translationally, is synthesized initially as an inactive proenzyme. Formation of the active enzyme involves a self-maturation process in which the active site pyruvoyl group is generated from an internal serine residue via an autocatalytic post-translational modification. Two non-identical subunits are generated from the proenzyme in this reaction, and the pyruvate is formed at the N-terminus of the alpha chain, which is derived from the carboxyl end of the proenzyme. The autoendoproteolytic cleavage occurs by a canonical serine protease mechanism, in which the side chain hydroxyl group of the serine supplies its oxygen atom to form the C-terminus of the beta chain, while the remainder of the serine residue undergoes an oxidative deamination to produce ammonia and the pyruvoyl prosthetic group on the alpha chain. During this reaction, the Ser that is part of the protease active site of the proenzyme becomes the pyruvoyl prosthetic group, which constitutes an essential element of the active site of the mature decarboxylase.

The protein localises to the cell membrane. It carries out the reaction a 1,2-diacyl-sn-glycero-3-phospho-L-serine + H(+) = a 1,2-diacyl-sn-glycero-3-phosphoethanolamine + CO2. It functions in the pathway phospholipid metabolism; phosphatidylethanolamine biosynthesis; phosphatidylethanolamine from CDP-diacylglycerol: step 2/2. In terms of biological role, catalyzes the formation of phosphatidylethanolamine (PtdEtn) from phosphatidylserine (PtdSer). The sequence is that of Phosphatidylserine decarboxylase proenzyme from Yersinia pseudotuberculosis serotype O:1b (strain IP 31758).